The chain runs to 101 residues: Small ribosomal subunit protein uS14A (101 aa).

Residues 35–56 are disordered; sequence TSSYEQRLDAQRALSRQPRDAS.

It belongs to the universal ribosomal protein uS14 family. In terms of assembly, part of the 30S ribosomal subunit. Contacts proteins S3 and S10.

Binds 16S rRNA, required for the assembly of 30S particles and may also be responsible for determining the conformation of the 16S rRNA at the A site. This Mycobacterium marinum (strain ATCC BAA-535 / M) protein is Small ribosomal subunit protein uS14A.